Here is a 664-residue protein sequence, read N- to C-terminus: UvrABC system protein B (664 aa).

The 159-residue stretch at 24 to 182 (AGLRAGYRHQ…QLIDLQFERN (159 aa)) folds into the Helicase ATP-binding domain. 37-44 (GATGTGKT) lines the ATP pocket. The Beta-hairpin signature appears at 90–113 (YYDEYTPEAYVPSKDLYIEKEASI). The Helicase C-terminal domain maps to 427–593 (QIDDLLGEIR…GIAKGVRDLT (167 aa)). A UVR domain is found at 624–659 (LKLIKDLEKQMKQAAKALAFEKAAALRDQIVELRQA).

The protein belongs to the UvrB family. As to quaternary structure, forms a heterotetramer with UvrA during the search for lesions. Interacts with UvrC in an incision complex.

The protein localises to the cytoplasm. In terms of biological role, the UvrABC repair system catalyzes the recognition and processing of DNA lesions. A damage recognition complex composed of 2 UvrA and 2 UvrB subunits scans DNA for abnormalities. Upon binding of the UvrA(2)B(2) complex to a putative damaged site, the DNA wraps around one UvrB monomer. DNA wrap is dependent on ATP binding by UvrB and probably causes local melting of the DNA helix, facilitating insertion of UvrB beta-hairpin between the DNA strands. Then UvrB probes one DNA strand for the presence of a lesion. If a lesion is found the UvrA subunits dissociate and the UvrB-DNA preincision complex is formed. This complex is subsequently bound by UvrC and the second UvrB is released. If no lesion is found, the DNA wraps around the other UvrB subunit that will check the other stand for damage. The polypeptide is UvrABC system protein B (Chloroflexus aggregans (strain MD-66 / DSM 9485)).